A 347-amino-acid chain; its full sequence is Holliday junction branch migration complex subunit RuvB (347 aa).

The large ATPase domain (RuvB-L) stretch occupies residues 1–186 (MKDENSINFL…FGITARFELY (186 aa)). ATP contacts are provided by residues Leu25, Arg26, Gly67, Lys70, Thr71, Thr72, 133–135 (EDY), Arg176, Tyr186, and Arg223. Thr71 serves as a coordination point for Mg(2+). The segment at 187-257 (SEIELVEIIK…IVSIGLEMLR (71 aa)) is small ATPAse domain (RuvB-S). The interval 260-347 (GEGLDEQDRN…DISENQRVSF (88 aa)) is head domain (RuvB-H). DNA contacts are provided by Arg315 and Arg320.

Belongs to the RuvB family. As to quaternary structure, homohexamer. Forms an RuvA(8)-RuvB(12)-Holliday junction (HJ) complex. HJ DNA is sandwiched between 2 RuvA tetramers; dsDNA enters through RuvA and exits via RuvB. An RuvB hexamer assembles on each DNA strand where it exits the tetramer. Each RuvB hexamer is contacted by two RuvA subunits (via domain III) on 2 adjacent RuvB subunits; this complex drives branch migration. In the full resolvosome a probable DNA-RuvA(4)-RuvB(12)-RuvC(2) complex forms which resolves the HJ.

Its subcellular location is the cytoplasm. It carries out the reaction ATP + H2O = ADP + phosphate + H(+). Its function is as follows. The RuvA-RuvB-RuvC complex processes Holliday junction (HJ) DNA during genetic recombination and DNA repair, while the RuvA-RuvB complex plays an important role in the rescue of blocked DNA replication forks via replication fork reversal (RFR). RuvA specifically binds to HJ cruciform DNA, conferring on it an open structure. The RuvB hexamer acts as an ATP-dependent pump, pulling dsDNA into and through the RuvAB complex. RuvB forms 2 homohexamers on either side of HJ DNA bound by 1 or 2 RuvA tetramers; 4 subunits per hexamer contact DNA at a time. Coordinated motions by a converter formed by DNA-disengaged RuvB subunits stimulates ATP hydrolysis and nucleotide exchange. Immobilization of the converter enables RuvB to convert the ATP-contained energy into a lever motion, pulling 2 nucleotides of DNA out of the RuvA tetramer per ATP hydrolyzed, thus driving DNA branch migration. The RuvB motors rotate together with the DNA substrate, which together with the progressing nucleotide cycle form the mechanistic basis for DNA recombination by continuous HJ branch migration. Branch migration allows RuvC to scan DNA until it finds its consensus sequence, where it cleaves and resolves cruciform DNA. This chain is Holliday junction branch migration complex subunit RuvB, found in Borrelia garinii subsp. bavariensis (strain ATCC BAA-2496 / DSM 23469 / PBi) (Borreliella bavariensis).